Consider the following 914-residue polypeptide: Protein translocase subunit SecA (914 aa).

ATP is bound by residues glutamine 87, glycine 105 to threonine 109, and aspartate 508. Zn(2+) contacts are provided by cysteine 898, cysteine 900, cysteine 909, and histidine 910.

Belongs to the SecA family. As to quaternary structure, monomer and homodimer. Part of the essential Sec protein translocation apparatus which comprises SecA, SecYEG and auxiliary proteins SecDF-YajC and YidC. It depends on Zn(2+) as a cofactor.

It localises to the cell inner membrane. Its subcellular location is the cytoplasm. It catalyses the reaction ATP + H2O + cellular proteinSide 1 = ADP + phosphate + cellular proteinSide 2.. Its function is as follows. Part of the Sec protein translocase complex. Interacts with the SecYEG preprotein conducting channel. Has a central role in coupling the hydrolysis of ATP to the transfer of proteins into and across the cell membrane, serving both as a receptor for the preprotein-SecB complex and as an ATP-driven molecular motor driving the stepwise translocation of polypeptide chains across the membrane. This Xylella fastidiosa (strain M12) protein is Protein translocase subunit SecA.